A 485-amino-acid chain; its full sequence is Glutamyl-tRNA(Gln) amidotransferase subunit A (485 aa).

Residues lysine 76 and serine 151 each act as charge relay system in the active site. Serine 175 functions as the Acyl-ester intermediate in the catalytic mechanism.

The protein belongs to the amidase family. GatA subfamily. Heterotrimer of A, B and C subunits.

The enzyme catalyses L-glutamyl-tRNA(Gln) + L-glutamine + ATP + H2O = L-glutaminyl-tRNA(Gln) + L-glutamate + ADP + phosphate + H(+). Allows the formation of correctly charged Gln-tRNA(Gln) through the transamidation of misacylated Glu-tRNA(Gln) in organisms which lack glutaminyl-tRNA synthetase. The reaction takes place in the presence of glutamine and ATP through an activated gamma-phospho-Glu-tRNA(Gln). In Thiobacillus denitrificans (strain ATCC 25259 / T1), this protein is Glutamyl-tRNA(Gln) amidotransferase subunit A.